Consider the following 152-residue polypeptide: Nucleoside diphosphate kinase (152 aa).

Residues Lys11, Phe59, Arg87, Thr93, Arg104, and Asn114 each coordinate ATP. The active-site Pros-phosphohistidine intermediate is the His117.

Belongs to the NDK family. As to quaternary structure, homotetramer. Requires Mg(2+) as cofactor.

It is found in the cytoplasm. It carries out the reaction a 2'-deoxyribonucleoside 5'-diphosphate + ATP = a 2'-deoxyribonucleoside 5'-triphosphate + ADP. It catalyses the reaction a ribonucleoside 5'-diphosphate + ATP = a ribonucleoside 5'-triphosphate + ADP. Functionally, major role in the synthesis of nucleoside triphosphates other than ATP. The ATP gamma phosphate is transferred to the NDP beta phosphate via a ping-pong mechanism, using a phosphorylated active-site intermediate. This chain is Nucleoside diphosphate kinase, found in Prochlorococcus marinus (strain MIT 9312).